The primary structure comprises 69 residues: Putative defensin-like protein 312 (69 aa).

The N-terminal stretch at 1–19 (MSCFSFLVYFLLFIVTKMS) is a signal peptide. Cys-45 and Cys-57 are joined by a disulfide.

This sequence belongs to the DEFL family.

It localises to the secreted. The polypeptide is Putative defensin-like protein 312 (Arabidopsis thaliana (Mouse-ear cress)).